Reading from the N-terminus, the 214-residue chain is Octanoyltransferase (214 aa).

Positions 34-214 (GLQKELVWLL…KFNEIFSSFN (181 aa)) constitute a BPL/LPL catalytic domain. Substrate contacts are provided by residues 73 to 80 (RGGKYTYH), 145 to 147 (AFG), and 158 to 160 (GVS). Residue C176 is the Acyl-thioester intermediate of the active site.

The protein belongs to the LipB family.

It localises to the cytoplasm. The catalysed reaction is octanoyl-[ACP] + L-lysyl-[protein] = N(6)-octanoyl-L-lysyl-[protein] + holo-[ACP] + H(+). The protein operates within protein modification; protein lipoylation via endogenous pathway; protein N(6)-(lipoyl)lysine from octanoyl-[acyl-carrier-protein]: step 1/2. In terms of biological role, catalyzes the transfer of endogenously produced octanoic acid from octanoyl-acyl-carrier-protein onto the lipoyl domains of lipoate-dependent enzymes. Lipoyl-ACP can also act as a substrate although octanoyl-ACP is likely to be the physiological substrate. The chain is Octanoyltransferase from Ehrlichia canis (strain Jake).